The chain runs to 265 residues: V0 assembly protein 1 (265 aa).

A signal peptide spans 1–24; the sequence is MVFGQLYALFIFTLSCCISKTVQA. The Vacuolar segment spans residues 25–223; it reads DSSKESSSFI…ILSSIWTEGL (199 aa). N-linked (GlcNAc...) asparagine glycans are attached at residues N69, N104, and N172. Residues 224–244 form a helical membrane-spanning segment; that stretch reads LMCLIVSALLLFILIVALSWI. The Cytoplasmic portion of the chain corresponds to 245 to 265; it reads SNLDITYGALEKSTNPIKKNN. Positions 262 to 265 match the ER retention motif motif; sequence KKNN.

It belongs to the VOA1 family. V-ATPase is a heteromultimeric enzyme composed of a peripheral catalytic V1 complex (components A to H) attached to an integral membrane V0 proton pore complex (components: a, c, c', c'', d, e, f and VOA1). Interacts with VMA21. Associates with the assembling V0 complex.

It localises to the vacuole membrane. Its subcellular location is the endoplasmic reticulum membrane. Its function is as follows. Accessory component of the V0 complex of vacuolar(H+)-ATPase (V-ATPase), a multisubunit enzyme composed of a peripheral complex (V1) that hydrolyzes ATP and a membrane integral complex (V0) that translocates protons. V-ATPase is responsible for acidifying and maintaining the pH of intracellular compartments. Functions with VMA21 in assembly of the V0 complex. The polypeptide is V0 assembly protein 1 (VOA1) (Saccharomyces cerevisiae (strain ATCC 204508 / S288c) (Baker's yeast)).